A 376-amino-acid chain; its full sequence is uncharacterized protein (376 aa).

This sequence belongs to the glycosyltransferase 28 family.

This is an uncharacterized protein from Methanosarcina mazei (strain ATCC BAA-159 / DSM 3647 / Goe1 / Go1 / JCM 11833 / OCM 88) (Methanosarcina frisia).